The following is a 693-amino-acid chain: Elongation factor G (693 aa).

Residues 8–283 (NRCRNIGIMA…AVVDYLPSPL (276 aa)) enclose the tr-type G domain. Residues 17–24 (AHIDAGKT), 81–85 (DTPGH), and 135–138 (NKMD) contribute to the GTP site.

The protein belongs to the TRAFAC class translation factor GTPase superfamily. Classic translation factor GTPase family. EF-G/EF-2 subfamily.

Its subcellular location is the cytoplasm. Functionally, catalyzes the GTP-dependent ribosomal translocation step during translation elongation. During this step, the ribosome changes from the pre-translocational (PRE) to the post-translocational (POST) state as the newly formed A-site-bound peptidyl-tRNA and P-site-bound deacylated tRNA move to the P and E sites, respectively. Catalyzes the coordinated movement of the two tRNA molecules, the mRNA and conformational changes in the ribosome. This is Elongation factor G from Acidobacterium capsulatum (strain ATCC 51196 / DSM 11244 / BCRC 80197 / JCM 7670 / NBRC 15755 / NCIMB 13165 / 161).